A 702-amino-acid polypeptide reads, in one-letter code: MIHTLETTVAGRKMKVDFGKTGMLSNAAIFMSYGDTVVMINANASKEPREGIDFFPLSVEYEERLYSVGKIPGGFIKREGKPSDKSILHARSIDRPLRPLFPKGYRNDVQIVNTVLSVEQDNLPEILAINGSSLALCLSSIPFTTPVAAVSVGLVDGEFIINPTVAQRENTILDLTVCATKERVMMVEAGGQEIDEETMYSAIMFGFEECKNIVAFQEEAVAKFGKTKNEPVLYKADEEVEKEVKSFAFDMIKEAMYIMDKDERNAQLDKVKEKISEEFSEKYEDKVADIAEVIYKTQKEIVRNMLLNEDRRPDGRAFDEVRPISCEVGILPRTHGTGLFTRGLTQVMTVATLGALGDVQILDGIAEEESKRYMHHYNFPSYSVGEVRPLRGPGRREIGHGALAERALEPLIPSQSEFPYTIRLVSEVLSSNGSTSQASVCGSTLALLDAGVPIKRPAAGIAMGLITSEDLEKEKVITDIQGIEDFFGDMDFKVAGTEKGITSIQFDTKIKGLSNSCVKDALEGAKKARLHILGKIKECIPEPRKELSKYAPRTEIICIDPEKIRDVIGAGGKVINKIIADTNVKIEIKEDGKIFVTSNNEPEGVKKAISIIEGLTKEVVQGEIYLGKVTKTTNFGAFVEILPGKEGLVHISKLDFARVEKVEDVVSVGDEILVKVTDIDNQGRINLSRKDAIAKKEEEKDK.

2 residues coordinate Mg(2+): Asp485 and Asp491. A KH domain is found at 552-612 (PRTEIICIDP…EGVKKAISII (61 aa)). Residues 622–690 (GEIYLGKVTK…NQGRINLSRK (69 aa)) enclose the S1 motif domain.

This sequence belongs to the polyribonucleotide nucleotidyltransferase family. Requires Mg(2+) as cofactor.

It localises to the cytoplasm. It carries out the reaction RNA(n+1) + phosphate = RNA(n) + a ribonucleoside 5'-diphosphate. Involved in mRNA degradation. Catalyzes the phosphorolysis of single-stranded polyribonucleotides processively in the 3'- to 5'-direction. This Clostridium botulinum (strain ATCC 19397 / Type A) protein is Polyribonucleotide nucleotidyltransferase.